A 783-amino-acid chain; its full sequence is MGYDNVCGERQTLLVVANRLPASAKRTGEHSWSLEMSPGGKFNLLVEKDAVSKSLAEMKCIPVFLNEVFDQYYNGYSNGILWPILHHMGLPQEYDHDTIKTFETQYDAYKKANRMFLDVIKENYKDGDIVWCQDYHLMFLPQYLKEYNNKIKVGWFLHSPFPSSEIYKTLPSRSELLRSVLAADLISFHTYDFARHFVNTCTRILGVEGTHEGVVYQGRVTRVVVLPMGIYPNRFIKTCKLPEVIQQMNELKDRFSGKKVILGVDRLDMIKGIPQKYLGFEKFLDENPNWRDKIVLVQIAVPTRNEVPEYQKLKNQVHRLVGRINGRFGSVSSLPIHHMDCSVDSNYLCALYAISDVMLVTSLRDGLNLVSHEFVACQEAKRGVLILSEFAGAGQSLGAGALLVNPWNVTEVSSAIKKALNMPYEERETRHRVNFKYVKTHSAEKWGFDFLSELNDAFDESELQIRKIPHELPQQDVIQRYSLSNNRLIILGFYGTITEPRNSLSKEMDLKLNPELKETLKALCNDPKTTVVVLSRSGKNILDKNFGEYKIWLAAENGMFLKHTTEEWVTNMPQNMNLDWVDGLKNVFKYFTDRTPRSFFEASKTSLVWNYEYADVEFGRAQARDLLQYLWAGPISNASAEVVRGKYSVEVHAIGVTKEPEIGHILGEIVHKKAMTTPIDYVFCSGYFLEKDEDIYTFFESEILSPKLSHETRSKSSSSNHSLEKKVSLNVLDLKQENYFSTAIGQARTKARYVVDSSHNVVNLLHKLAVANTTTTSVKKPNV.

The glycosyltransferase stretch occupies residues glutamine 11–aspartate 456.

In the N-terminal section; belongs to the glycosyltransferase 20 family. It in the C-terminal section; belongs to the trehalose phosphatase family.

The catalysed reaction is D-glucose 6-phosphate + UDP-alpha-D-glucose = alpha,alpha-trehalose 6-phosphate + UDP + H(+). This chain is Probable alpha,alpha-trehalose-phosphate synthase [UDP-forming] 3 (TPS3), found in Arabidopsis thaliana (Mouse-ear cress).